Here is a 265-residue protein sequence, read N- to C-terminus: 4-hydroxy-tetrahydrodipicolinate reductase (265 aa).

NAD(+) is bound by residues 7–12 (GASGRM) and Asp33. Arg34 contacts NADP(+). NAD(+)-binding positions include 96–98 (GTT) and 120–123 (AANM). His153 functions as the Proton donor/acceptor in the catalytic mechanism. His154 contributes to the (S)-2,3,4,5-tetrahydrodipicolinate binding site. Lys157 serves as the catalytic Proton donor. 163–164 (GT) contributes to the (S)-2,3,4,5-tetrahydrodipicolinate binding site.

It belongs to the DapB family.

It is found in the cytoplasm. The enzyme catalyses (S)-2,3,4,5-tetrahydrodipicolinate + NAD(+) + H2O = (2S,4S)-4-hydroxy-2,3,4,5-tetrahydrodipicolinate + NADH + H(+). It catalyses the reaction (S)-2,3,4,5-tetrahydrodipicolinate + NADP(+) + H2O = (2S,4S)-4-hydroxy-2,3,4,5-tetrahydrodipicolinate + NADPH + H(+). It participates in amino-acid biosynthesis; L-lysine biosynthesis via DAP pathway; (S)-tetrahydrodipicolinate from L-aspartate: step 4/4. In terms of biological role, catalyzes the conversion of 4-hydroxy-tetrahydrodipicolinate (HTPA) to tetrahydrodipicolinate. In Burkholderia orbicola (strain MC0-3), this protein is 4-hydroxy-tetrahydrodipicolinate reductase.